Here is a 453-residue protein sequence, read N- to C-terminus: Chromosomal replication initiator protein DnaA (453 aa).

The interval 1–74 (MKEKQFWNRI…GFEIYDAEIT (74 aa)) is domain I, interacts with DnaA modulators. The domain II stretch occupies residues 74-113 (TPHYIFTKPQDTTSSQVEEATNLTLYDYSPKLVSIPYSDT). Residues 114-331 (GLKEKYTFDN…GAINDITLIA (218 aa)) are domain III, AAA+ region. Residues Gly-158, Gly-160, Lys-161, and Thr-162 each coordinate ATP. The domain IV, binds dsDNA stretch occupies residues 332-453 (RVKKIKDITI…EIESIKKKIK (122 aa)).

This sequence belongs to the DnaA family. As to quaternary structure, oligomerizes as a right-handed, spiral filament on DNA at oriC.

Its subcellular location is the cytoplasm. Its function is as follows. Plays an essential role in the initiation and regulation of chromosomal replication. ATP-DnaA binds to the origin of replication (oriC) to initiate formation of the DNA replication initiation complex once per cell cycle. Binds the DnaA box (a 9 base pair repeat at the origin) and separates the double-stranded (ds)DNA. Forms a right-handed helical filament on oriC DNA; dsDNA binds to the exterior of the filament while single-stranded (ss)DNA is stabiized in the filament's interior. The ATP-DnaA-oriC complex binds and stabilizes one strand of the AT-rich DNA unwinding element (DUE), permitting loading of DNA polymerase. After initiation quickly degrades to an ADP-DnaA complex that is not apt for DNA replication. Binds acidic phospholipids. This is Chromosomal replication initiator protein DnaA from Streptococcus pneumoniae (strain Taiwan19F-14).